Reading from the N-terminus, the 195-residue chain is NADH-quinone oxidoreductase subunit I (195 aa).

4Fe-4S ferredoxin-type domains lie at 44 to 74 (LNRY…VEGA) and 90 to 119 (QVYQ…MTNE). [4Fe-4S] cluster-binding residues include Cys54, Cys57, Cys60, Cys64, Cys99, Cys102, Cys105, and Cys109. Residues 145–195 (MTAPPHALRPGTTQDDYYRGDITAVPEQAAPEQAAPEQPAPEREPNPETEK) are disordered. The segment covering 168-181 (AVPEQAAPEQAAPE) has biased composition (low complexity). The span at 184-195 (APEREPNPETEK) shows a compositional bias: basic and acidic residues.

It belongs to the complex I 23 kDa subunit family. In terms of assembly, NDH-1 is composed of 14 different subunits. Subunits NuoA, H, J, K, L, M, N constitute the membrane sector of the complex. [4Fe-4S] cluster serves as cofactor.

It localises to the cell membrane. It catalyses the reaction a quinone + NADH + 5 H(+)(in) = a quinol + NAD(+) + 4 H(+)(out). Functionally, NDH-1 shuttles electrons from NADH, via FMN and iron-sulfur (Fe-S) centers, to quinones in the respiratory chain. The immediate electron acceptor for the enzyme in this species is believed to be ubiquinone. Couples the redox reaction to proton translocation (for every two electrons transferred, four hydrogen ions are translocated across the cytoplasmic membrane), and thus conserves the redox energy in a proton gradient. In Rhodococcus erythropolis (strain PR4 / NBRC 100887), this protein is NADH-quinone oxidoreductase subunit I.